A 34-amino-acid chain; its full sequence is Photosystem II reaction center protein M (34 aa).

The helical transmembrane segment at 5-25 (ILALIAVALFISIPTAFLVII) threads the bilayer.

The protein belongs to the PsbM family. PSII is composed of 1 copy each of membrane proteins PsbA, PsbB, PsbC, PsbD, PsbE, PsbF, PsbH, PsbI, PsbJ, PsbK, PsbL, PsbM, PsbT, PsbX, PsbY, PsbZ, Psb30/Ycf12, at least 3 peripheral proteins of the oxygen-evolving complex and a large number of cofactors. It forms dimeric complexes.

It is found in the plastid. Its subcellular location is the chloroplast thylakoid membrane. Functionally, one of the components of the core complex of photosystem II (PSII). PSII is a light-driven water:plastoquinone oxidoreductase that uses light energy to abstract electrons from H(2)O, generating O(2) and a proton gradient subsequently used for ATP formation. It consists of a core antenna complex that captures photons, and an electron transfer chain that converts photonic excitation into a charge separation. This subunit is found at the monomer-monomer interface. The polypeptide is Photosystem II reaction center protein M (Welwitschia mirabilis (Tree tumbo)).